Consider the following 288-residue polypeptide: Elongation factor Ts (288 aa).

The tract at residues 82–85 (TDFV) is involved in Mg(2+) ion dislocation from EF-Tu.

Belongs to the EF-Ts family.

The protein localises to the cytoplasm. Associates with the EF-Tu.GDP complex and induces the exchange of GDP to GTP. It remains bound to the aminoacyl-tRNA.EF-Tu.GTP complex up to the GTP hydrolysis stage on the ribosome. The chain is Elongation factor Ts from Pelodictyon phaeoclathratiforme (strain DSM 5477 / BU-1).